A 212-amino-acid polypeptide reads, in one-letter code: Cytidylate kinase (212 aa).

Position 7–15 (7–15 (GPAASGKGT)) interacts with ATP.

It belongs to the cytidylate kinase family. Type 1 subfamily.

It localises to the cytoplasm. The enzyme catalyses CMP + ATP = CDP + ADP. The catalysed reaction is dCMP + ATP = dCDP + ADP. This is Cytidylate kinase from Rhodopseudomonas palustris (strain BisB18).